The primary structure comprises 223 residues: Phosphoribosylformylglycinamidine synthase subunit PurQ (223 aa).

In terms of domain architecture, Glutamine amidotransferase type-1 spans 3-223; that stretch reads SAVILLPGLN…LFAGALGITA (221 aa). Cys-87 acts as the Nucleophile in catalysis. Residues His-197 and Glu-199 contribute to the active site.

In terms of assembly, part of the FGAM synthase complex composed of 1 PurL, 1 PurQ and 2 PurS subunits.

It is found in the cytoplasm. The enzyme catalyses N(2)-formyl-N(1)-(5-phospho-beta-D-ribosyl)glycinamide + L-glutamine + ATP + H2O = 2-formamido-N(1)-(5-O-phospho-beta-D-ribosyl)acetamidine + L-glutamate + ADP + phosphate + H(+). The catalysed reaction is L-glutamine + H2O = L-glutamate + NH4(+). It participates in purine metabolism; IMP biosynthesis via de novo pathway; 5-amino-1-(5-phospho-D-ribosyl)imidazole from N(2)-formyl-N(1)-(5-phospho-D-ribosyl)glycinamide: step 1/2. In terms of biological role, part of the phosphoribosylformylglycinamidine synthase complex involved in the purines biosynthetic pathway. Catalyzes the ATP-dependent conversion of formylglycinamide ribonucleotide (FGAR) and glutamine to yield formylglycinamidine ribonucleotide (FGAM) and glutamate. The FGAM synthase complex is composed of three subunits. PurQ produces an ammonia molecule by converting glutamine to glutamate. PurL transfers the ammonia molecule to FGAR to form FGAM in an ATP-dependent manner. PurS interacts with PurQ and PurL and is thought to assist in the transfer of the ammonia molecule from PurQ to PurL. This chain is Phosphoribosylformylglycinamidine synthase subunit PurQ, found in Brucella abortus biovar 1 (strain 9-941).